A 649-amino-acid polypeptide reads, in one-letter code: Acid beta-fructofuranosidase (649 aa).

Residues 1–22 (MEHHKPLLPTSSHAAPTSSTRK) lie on the Cytoplasmic side of the membrane. Residues 1–101 (MEHHKPLLPT…NLLFAGEGGA (101 aa)) constitute a propeptide, removed in mature form. A helical; Signal-anchor for type II membrane protein transmembrane segment spans residues 23 to 43 (DLLFVLCGLLFLSSLVAYGGY). Residues 44-649 (RASGVPHAHL…PFPFNPDQKS (606 aa)) are Lumenal-facing. Residues 52–75 (HLSSPTSNHQQDHQSPTSLPSSKW) are disordered. The segment covering 54 to 72 (SSPTSNHQQDHQSPTSLPS) has biased composition (polar residues). Residues 127–130 (WMND), Q146, W154, and 189–190 (WT) contribute to the substrate site. D130 is a catalytic residue. The N-linked (GlcNAc...) (complex) asparagine glycan is linked to N210. Substrate is bound at residue 253 to 254 (RD). The N-linked (GlcNAc...) (complex) asparagine glycan is linked to N275. Substrate is bound by residues E308 and D341. A disulfide bond links C498 and C546. N618 carries N-linked (GlcNAc...) (high mannose) asparagine glycosylation.

Belongs to the glycosyl hydrolase 32 family. As to quaternary structure, present in two forms, a 70 kDa monomer and a heterodimer of the 30 kDa and 38 kDa subunits. The ratio of the levels of the two forms within cells appears to be regulated developmentally.

It is found in the membrane. The protein localises to the vacuole lumen. It carries out the reaction Hydrolysis of terminal non-reducing beta-D-fructofuranoside residues in beta-D-fructofuranosides.. The protein operates within glycan biosynthesis; sucrose metabolism. Possible role in the continued mobilization of sucrose to sink organs. The sequence is that of Acid beta-fructofuranosidase (INVA) from Vigna radiata var. radiata (Mung bean).